The chain runs to 514 residues: Nitric oxide reductase transcription regulator NorR1 (514 aa).

A 4-aspartylphosphate modification is found at aspartate 54. Residues isoleucine 187 to leucine 416 form the Sigma-54 factor interaction domain. ATP is bound by residues glycine 215–glutamate 222 and glutamate 287–glutamine 296. The segment at residues tryptophan 490–lysine 509 is a DNA-binding region (H-T-H motif).

It functions in the pathway nitrogen metabolism; nitrate reduction (denitrification) [regulation]. Its function is as follows. Required for the nitric oxide (NO) induced expression of NO reductase. Not required for expression of 2 other pathway members, nitrate reductase (nirS) and nitrous oxide reductase (nosZ). This chain is Nitric oxide reductase transcription regulator NorR1 (norR1), found in Cupriavidus necator (strain ATCC 17699 / DSM 428 / KCTC 22496 / NCIMB 10442 / H16 / Stanier 337) (Ralstonia eutropha).